We begin with the raw amino-acid sequence, 40 residues long: Large ribosomal subunit protein bL36B (40 aa).

This sequence belongs to the bacterial ribosomal protein bL36 family.

This Streptomyces coelicolor (strain ATCC BAA-471 / A3(2) / M145) protein is Large ribosomal subunit protein bL36B.